A 64-amino-acid chain; its full sequence is Large ribosomal subunit protein bL35 (64 aa).

The interval 1-23 (MPKMKTHRGAAKRFKKTKNKIKR) is disordered.

It belongs to the bacterial ribosomal protein bL35 family.

The protein is Large ribosomal subunit protein bL35 of Nitratiruptor sp. (strain SB155-2).